The primary structure comprises 295 residues: Light-independent protochlorophyllide reductase iron-sulfur ATP-binding protein (295 aa).

Residues 39–44 (GIGKST) and Lys68 each bind ATP. Ser43 serves as a coordination point for Mg(2+). [4Fe-4S] cluster contacts are provided by Cys124 and Cys158. 209–210 (NR) contributes to the ATP binding site.

Belongs to the NifH/BchL/ChlL family. As to quaternary structure, homodimer. Protochlorophyllide reductase is composed of three subunits; ChlL, ChlN and ChlB. Requires [4Fe-4S] cluster as cofactor.

It carries out the reaction chlorophyllide a + oxidized 2[4Fe-4S]-[ferredoxin] + 2 ADP + 2 phosphate = protochlorophyllide a + reduced 2[4Fe-4S]-[ferredoxin] + 2 ATP + 2 H2O. It participates in porphyrin-containing compound metabolism; chlorophyll biosynthesis (light-independent). In terms of biological role, component of the dark-operative protochlorophyllide reductase (DPOR) that uses Mg-ATP and reduced ferredoxin to reduce ring D of protochlorophyllide (Pchlide) to form chlorophyllide a (Chlide). This reaction is light-independent. The L component serves as a unique electron donor to the NB-component of the complex, and binds Mg-ATP. The chain is Light-independent protochlorophyllide reductase iron-sulfur ATP-binding protein from Prochlorococcus marinus (strain MIT 9515).